A 907-amino-acid chain; its full sequence is Leucine-rich repeat-containing G-protein coupled receptor 5 (907 aa).

The first 21 residues, 1–21 (MDTSSVGVLLSLPVLLQLAAG), serve as a signal peptide directing secretion. Over 22 to 553 (GGSPRPGTLL…SPGPFKLCEY (532 aa)) the chain is Extracellular. Residues 33–64 (GCPAHCQCEPDGRMLLRVDCSDLGLSELPSNL) enclose the LRRNT domain. Cystine bridges form between Cys34-Cys40 and Cys38-Cys52. LRR repeat units follow at residues 44 to 64 (GRML…PSNL), 65 to 88 (SVFT…PLHS), 89 to 112 (LRFL…AFAG), 114 to 136 (YSLK…ALQN), 137 to 160 (LRSL…CFSG), 162 to 184 (HSLR…AFRS), 185 to 208 (LSAL…AFGN), 209 to 232 (LSSL…CFDG), 233 to 256 (LHSL…VRTL), 257 to 279 (SNLK…AFVG), 281 to 303 (PSLI…AFQH), 304 to 327 (LPEL…LTGT), 328 to 350 (ASLE…VCDQ), 351 to 375 (LPNL…VCQK), 377 to 396 (QKID…TFQQ), 397 to 420 (LFSL…AFST), and 421 to 444 (LPSL…GLHG). N-linked (GlcNAc...) asparagine glycosylation is found at Asn63 and Asn77. An N-linked (GlcNAc...) asparagine glycan is attached at Asn208. A disulfide bond links Cys348 and Cys373. Cys479 and Cys541 are joined by a disulfide. The N-linked (GlcNAc...) asparagine glycan is linked to Asn500. Residues 554-574 (LFGSWLIRIGVWTIAVLALTC) form a helical membrane-spanning segment. The stretch at 564–585 (VWTIAVLALTCNALVTSTVFRA) is one LRR 18 repeat. The Cytoplasmic portion of the chain corresponds to 575–593 (NALVTSTVFRAAVYISSIK). Residues 594–614 (LLIGLIAAVNMLMGVSSAVLA) form a helical membrane-spanning segment. Residues 615-638 (GVDAFTFGSFAQHGAWWEQAVGCQ) are Extracellular-facing. Cys637 and Cys712 are joined by a disulfide. Residues 639 to 659 (VVGFLSIFASESSVFLLTLAA) traverse the membrane as a helical segment. Residues 660 to 682 (LERGWSVKCSAKFETQTPFPSLR) are Cytoplasmic-facing. The chain crosses the membrane as a helical span at residues 683–703 (ATLALCALLAGTVAAVPLLGG). Residues 704–723 (SEYSASPLCLPLPFGEPRAT) lie on the Extracellular side of the membrane. The chain crosses the membrane as a helical span at residues 724-744 (GYMVALVLLNSLCFLVMTVAY). Topologically, residues 745 to 767 (TRLYCHLEKGDLESMWDCSMVKH) are cytoplasmic. Residues 768-788 (VALLLFTNCILHCPVAFLSFS) traverse the membrane as a helical segment. At 789 to 802 (SLLNLTFISPEVIK) the chain is on the extracellular side. An N-linked (GlcNAc...) asparagine glycan is attached at Asn792. A helical membrane pass occupies residues 803–823 (FILLVIVPLPACLNPLLYILF). Residues 824 to 907 (NPHFKEDLGS…LSSVAFVPCL (84 aa)) lie on the Cytoplasmic side of the membrane.

It belongs to the G-protein coupled receptor 1 family. As to quaternary structure, identified in a complex composed of RNF43, LGR5 and RSPO1. Also interacts with other R-spondin ligands, including RSPO2, RSPO3 and RSPO4.

The protein resides in the cell membrane. The protein localises to the golgi apparatus. It localises to the trans-Golgi network membrane. In terms of biological role, receptor for R-spondins that potentiates the canonical Wnt signaling pathway and acts as a stem cell marker of the intestinal epithelium and the hair follicle. Upon binding to R-spondins (RSPO1, RSPO2, RSPO3 or RSPO4), associates with phosphorylated LRP6 and frizzled receptors that are activated by extracellular Wnt receptors, triggering the canonical Wnt signaling pathway to increase expression of target genes. In contrast to classical G-protein coupled receptors, does not activate heterotrimeric G-proteins to transduce the signal. Involved in the development and/or maintenance of the adult intestinal stem cells during postembryonic development. This is Leucine-rich repeat-containing G-protein coupled receptor 5 (LGR5) from Bos taurus (Bovine).